The sequence spans 107 residues: Iron-binding protein IscA (107 aa).

Fe cation contacts are provided by Cys35, Cys99, and Cys101.

It belongs to the HesB/IscA family. As to quaternary structure, homodimer; may form tetramers and higher multimers. Requires Fe cation as cofactor.

Its function is as follows. Is able to transfer iron-sulfur clusters to apo-ferredoxin. Multiple cycles of [2Fe2S] cluster formation and transfer are observed, suggesting that IscA acts catalytically. Recruits intracellular free iron so as to provide iron for the assembly of transient iron-sulfur cluster in IscU in the presence of IscS, L-cysteine and the thioredoxin reductase system TrxA/TrxB. The sequence is that of Iron-binding protein IscA from Klebsiella pneumoniae (strain 342).